Here is a 131-residue protein sequence, read N- to C-terminus: DNA-directed RNA polymerase subunit omega (131 aa).

The disordered stretch occupies residues 78–131 (DEPEAEAVPALSSAPDAAQSDAMGDVQFDRMTEEDLLRGLEGLVPPAATDDDGE). The span at 104-115 (QFDRMTEEDLLR) shows a compositional bias: basic and acidic residues.

Belongs to the RNA polymerase subunit omega family. As to quaternary structure, the RNAP catalytic core consists of 2 alpha, 1 beta, 1 beta' and 1 omega subunit. When a sigma factor is associated with the core the holoenzyme is formed, which can initiate transcription.

It catalyses the reaction RNA(n) + a ribonucleoside 5'-triphosphate = RNA(n+1) + diphosphate. Functionally, promotes RNA polymerase assembly. Latches the N- and C-terminal regions of the beta' subunit thereby facilitating its interaction with the beta and alpha subunits. The sequence is that of DNA-directed RNA polymerase subunit omega from Beijerinckia indica subsp. indica (strain ATCC 9039 / DSM 1715 / NCIMB 8712).